The following is a 407-amino-acid chain: Probable endo-beta-1,4-glucanase celB (407 aa).

An N-terminal signal peptide occupies residues 1–18; sequence MAQTLAAASLVLVPLVTA. N-linked (GlcNAc...) asparagine glycosylation occurs at Asn-136. The Nucleophile role is filled by Glu-216. Catalysis depends on Glu-221, which acts as the Proton donor.

It belongs to the glycosyl hydrolase 7 (cellulase C) family.

It is found in the secreted. It carries out the reaction Endohydrolysis of (1-&gt;4)-beta-D-glucosidic linkages in cellulose, lichenin and cereal beta-D-glucans.. In terms of biological role, has endoglucanase activity on substrates containing beta-1,4 glycosidic bonds, like in carboxymethylcellulose (CMC), hydroxyethylcellulose (HEC) and beta-glucan. Involved in the degradation of complex natural cellulosic substrates. In Aspergillus fumigatus (strain ATCC MYA-4609 / CBS 101355 / FGSC A1100 / Af293) (Neosartorya fumigata), this protein is Probable endo-beta-1,4-glucanase celB (celB).